Consider the following 746-residue polypeptide: Protein C-mannosyl-transferase DPY19L1 (746 aa).

Residues Met1–Asp68 are disordered. Phosphoserine occurs at positions 28 and 31. A compositionally biased stretch (low complexity) spans Arg59–Asp68. The next 11 membrane-spanning stretches (helical) occupy residues Leu137–Met159, Ala227–Ile247, Leu257–Thr279, Leu307–Pro325, Phe331–Asp350, Ile357–Gly374, Thr380–Met396, Val405–Leu425, Leu481–Met501, Gly520–Met540, and Leu562–Ala582.

The protein belongs to the dpy-19 family.

The protein resides in the endoplasmic reticulum membrane. It catalyses the reaction L-tryptophyl-[protein] + a di-trans,poly-cis-dolichyl beta-D-mannosyl phosphate = C-alpha-D-mannosyl-L-tryptophyl-[protein] + a di-trans,poly-cis-dolichyl phosphate + H(+). It functions in the pathway protein modification; protein glycosylation. C-mannosyltransferase that mediates the C-mannosylation tryptophan residues on target proteins. The reaction occurs on the luminal side of the endoplasmic reticulum and involves the transfer of a mannose unit from a dolichylphosphate mannose (Dol-P-Man) donor to an acceptor protein containing a WxxW consensus sequence. C-mannosylates the first two tryptophans in the WxxWxxWxxC sequence motif in thrombospondin (TSP) type-1 repeats of UNC5A. Regulates neurite extension during development. The sequence is that of Protein C-mannosyl-transferase DPY19L1 (Dpy19l1) from Mus musculus (Mouse).